The primary structure comprises 429 residues: MSKSLQAIRGMNDILPEQTPLWRHFEGTVSRLLDNYGYRQIRMPVVEFTDLFKRSIGEVTDIVEKEMYTFADRNGDSLTLRPEGTAACVRAVLEHGITGGGQVQKLWYIGPMFRHERPQKGRYRQFHQIGVEVFNLDGPDIDAELIVMTWRLWGMLGIRNAVKLELNSLGTSEARARYRDALVEFLSAHLDQLDEDSQRRLKTNPLRVLDTKHPETQAVLVDAPKLADYLDDESRIHFEGLKARLDAAGIPYVINPKLVRGLDYYSKTVFEWVTDQLGAQGTVCAGGRYDGLVEQMGGKPTAGVGFAMGIERLVLLLETLEQVPEEIARQVDVYLCAFGEAAELAALALTEQVRDRLPNLRLQVNAGAGSFKSQFKKADKSGALYALILGEEELAAKIIGVKPLRGQGEQQNIAWDALSEHLASCVVQG.

The protein belongs to the class-II aminoacyl-tRNA synthetase family. As to quaternary structure, homodimer.

It is found in the cytoplasm. The catalysed reaction is tRNA(His) + L-histidine + ATP = L-histidyl-tRNA(His) + AMP + diphosphate + H(+). This is Histidine--tRNA ligase from Pseudomonas syringae pv. tomato (strain ATCC BAA-871 / DC3000).